The chain runs to 377 residues: Cyclin-I (377 aa).

The disordered stretch occupies residues 356–377 (TDLSRQEGHASPCPPLQPVSVM). Residues 367-377 (PCPPLQPVSVM) are compositionally biased toward pro residues.

Belongs to the cyclin family.

The polypeptide is Cyclin-I (Ccni) (Mus musculus (Mouse)).